A 301-amino-acid chain; its full sequence is MAPDIQRVKAFLLDLQDRICQQLSAVDGDDFVEDAWQREGGGGGRSRVLRDGVVFEQAGVNFSHVHGDAMPASATAHRPELAGRSFEAMGVSLVVHPRNPYVPTSHANVRFFIAEKPGADPVWWFGGGFDLTPFYGFEEDAVHWHRTARDLCAPFGDDVYPRYKKWCDDYFYLKHRQEARGIGGLFFDDLNTPDFDTCFAFMQAVGDGYLNAYLPIVERRKTLPWGEREREFQLYRRGRYVEFNLVWDRGTLFGLQTGGRTESILMSMPPLVRWEYGYQPEENSPEAALYRDFLPVRDWVK.

Ser92 lines the substrate pocket. His96 and His106 together coordinate a divalent metal cation. Catalysis depends on His106, which acts as the Proton donor. Residue 108–110 (NVR) participates in substrate binding. Residues His145 and His175 each contribute to the a divalent metal cation site. The segment at 240–275 (YVEFNLVWDRGTLFGLQTGGRTESILMSMPPLVRWE) is important for dimerization. 258-260 (GGR) contacts substrate.

It belongs to the aerobic coproporphyrinogen-III oxidase family. Homodimer. Requires a divalent metal cation as cofactor.

The protein resides in the cytoplasm. It catalyses the reaction coproporphyrinogen III + O2 + 2 H(+) = protoporphyrinogen IX + 2 CO2 + 2 H2O. The protein operates within porphyrin-containing compound metabolism; protoporphyrin-IX biosynthesis; protoporphyrinogen-IX from coproporphyrinogen-III (O2 route): step 1/1. Involved in the heme biosynthesis. Catalyzes the aerobic oxidative decarboxylation of propionate groups of rings A and B of coproporphyrinogen-III to yield the vinyl groups in protoporphyrinogen-IX. The polypeptide is Oxygen-dependent coproporphyrinogen-III oxidase (Cronobacter sakazakii (strain ATCC BAA-894) (Enterobacter sakazakii)).